The primary structure comprises 251 residues: Ribosomal RNA small subunit methyltransferase J (251 aa).

S-adenosyl-L-methionine contacts are provided by residues 100–101, 116–117, and aspartate 170; these read RD and ER.

This sequence belongs to the methyltransferase superfamily. RsmJ family.

It localises to the cytoplasm. The catalysed reaction is guanosine(1516) in 16S rRNA + S-adenosyl-L-methionine = N(2)-methylguanosine(1516) in 16S rRNA + S-adenosyl-L-homocysteine + H(+). Specifically methylates the guanosine in position 1516 of 16S rRNA. This chain is Ribosomal RNA small subunit methyltransferase J, found in Actinobacillus pleuropneumoniae serotype 3 (strain JL03).